The primary structure comprises 165 residues: MAFENKIVEAFIEIPTGSQNKYEFDKERGIFKLDRVLYSPMFYPAEYGYLQNTLALDGDPLDILVITTNPPFPGCVIDTRVIGYLNMVDSGEEDAKLIGVPVEDPRFDEVRSIEDLPQHKLKEIAHFFERYKDLQGKRTEIGTWEGPEAAAKLIDECIARYNEQK.

Residues Lys21, Arg35, and Tyr47 each coordinate substrate. Residues Asp57, Asp62, and Asp94 each contribute to the Mg(2+) site. Tyr131 serves as a coordination point for substrate.

The protein belongs to the PPase family. In terms of assembly, homotrimer. In presence of divalent cations the trimers aggregate to form a hexamer. Mg(2+) serves as cofactor.

The protein localises to the cytoplasm. It carries out the reaction diphosphate + H2O = 2 phosphate + H(+). In terms of biological role, catalyzes the hydrolysis of inorganic pyrophosphate (PPi) forming two phosphate ions. This chain is Inorganic pyrophosphatase, found in Bacillus sp. (strain PS3).